Consider the following 143-residue polypeptide: 3-hydroxyacyl-[acyl-carrier-protein] dehydratase FabZ (143 aa).

His-47 is an active-site residue.

It belongs to the thioester dehydratase family. FabZ subfamily.

Its subcellular location is the cytoplasm. The enzyme catalyses a (3R)-hydroxyacyl-[ACP] = a (2E)-enoyl-[ACP] + H2O. Functionally, involved in unsaturated fatty acids biosynthesis. Catalyzes the dehydration of short chain beta-hydroxyacyl-ACPs and long chain saturated and unsaturated beta-hydroxyacyl-ACPs. This Moorella thermoacetica (strain ATCC 39073 / JCM 9320) protein is 3-hydroxyacyl-[acyl-carrier-protein] dehydratase FabZ.